Here is a 185-residue protein sequence, read N- to C-terminus: Ribosome-recycling factor (185 aa).

Belongs to the RRF family.

The protein localises to the cytoplasm. Its function is as follows. Responsible for the release of ribosomes from messenger RNA at the termination of protein biosynthesis. May increase the efficiency of translation by recycling ribosomes from one round of translation to another. The chain is Ribosome-recycling factor from Syntrophus aciditrophicus (strain SB).